The chain runs to 313 residues: Olfactory receptor 1G1 (313 aa).

The Extracellular segment spans residues 1-25 (MEGKNLTSISEFFLLGFSEQLEEQK). N-linked (GlcNAc...) asparagine glycosylation is present at Asn5. Residues 26-49 (ALFGSFLFMYLVMVAGNLLIILVI) form a helical membrane-spanning segment. Topologically, residues 50–57 (ITDTQLHT) are cytoplasmic. Residues 58-79 (PMYFFLANLSLADACFVSTTVP) traverse the membrane as a helical segment. Over 80–100 (KMLANIQIQSQAISYSGCLLQ) the chain is Extracellular. A disulfide bond links Cys97 and Cys189. A helical transmembrane segment spans residues 101–120 (LYFFMLFVMLEAFLLAVMAY). Residues 121-140 (DHYVAICHPLHYILIMSPGL) are Cytoplasmic-facing. A helical membrane pass occupies residues 141-158 (CVFLVSASWIMNALYSLL). At 159 to 196 (HTLLMNSLSFCANHEIPHFFCDIDPLLSLSCADPFTNE) the chain is on the extracellular side. A helical membrane pass occupies residues 197–219 (LVIFITGGLTGLICVLCLIISYT). At 220–236 (NVFSTILKIPSAQGKRK) the chain is on the cytoplasmic side. A helical transmembrane segment spans residues 237–259 (AFSTCSSHLSVVSLFXGTSFCVY). Topologically, residues 260-272 (FSPPSTRXAQKDT) are extracellular. Residues 273–292 (VASVMYTVVTPMLNPFIYSL) form a helical membrane-spanning segment. The Cytoplasmic portion of the chain corresponds to 293–313 (RNQEIKSSLRKLIWVRKIHSP).

It belongs to the G-protein coupled receptor 1 family.

It localises to the cell membrane. Its function is as follows. Odorant receptor. The protein is Olfactory receptor 1G1 (OR1G1) of Pan troglodytes (Chimpanzee).